The primary structure comprises 1316 residues: MLDVNFFDELRIGLATAEDIRQWSYGEVKKPETINYRTLKPEKDGLFCEKIFGPTRDWECYCGKYKRVRFKGIICERCGVEVTRAKVRRERMGHIELAAPVTHIWYFKGVPSRLGYLLDLAPKDLEKIIYFAAYVITSVDEEMRHNELSTLEAEMMVERKAVEDQRDADLEARAQKLEADLAELEAEGAKADARRKVRDSGEREMRQIRDRAQRELDRLEDIWNTFTKLAPKQLIVDENLYRELVDRYGEYFTGAMGAESIQKLIENFDIDAEAEQLRDVIRNGKGQKKLRALKRLKVVAAFQQSGNSPMGMVLDAVPVIPPELRPMVQLDGGRFATSDLNDLYRRVINRNNRLKRLIDLGAPEIIVNNEKRMLQESVDALFDNGRRGRPVTGPGNRPLKSLSDLLKGKQGRFRQNLLGKRVDYSGRSVIVVGPQLKLHQCGLPKLMALELFKPFVMKRLVDLNHAQNIKSAKRMVERQRPQVWDVLEEVIAEHPVLLNRAPTLHRLGIQAFEPMLVEGKAIQLHPLVCEAFNADFDGDQMAVHLPLSAEAQAEARILMLSSNNILSPASGRPLAMPRLDMVTGLYYLTTEVEGDKGEYRPAAKDTPEVGVYSSPAEAIMAADRGVLSVRAKIKVRLTQLRPPAEIEAELFGANGWQPGDAWMAETTLGRVLFNELLPVGYPFVNKQMHKKVQASIINDLAERYPMIVVAQTVDKLKDAGFYWATRSGVTVSMADVLVPPRKKEILDQYEERAEKVEKQFQRGALNHDERNEALVEIWKEATDEVGQALREHYPADNPIITIVDSGATGNFTQTRTLAGMKGLVTNPKGEFIPRPVKSSFREGLTVLEYFINTHGARKGLADTALRTADSGYLTRRLVDVSQDVIVREHDCETERGIVVELAERQPDGTLIRDPYIETSAYARTLGTDAVDEAGNVIVARGEDLGDPEIDALLAAGITSVKVRSVLTCTTGTGVCATCYGRSMATGKLVDIGEAVGIVAAQSIGEPGTQLTMRTFHQGGVGEDITGGLPRVQELFEARIPRGKAPIADVTGRVRLEDGERFYKITIVPDDGSEEVVYDKLSKRQRLRVFKHEDGSERVLSDGDHVEVGQQLMEGSADPHEVLRVQGPREVQIHLVREVQEVYRAQGVSIHDKHIEVIVRQMLRRVTIIDSGSTEFLPGSLIDRAEFEAENRRVVAEGGEPAAGRPVLMGITKASLATDSWLSAASFQETTRVLTDAAINCRSDKLNGLKENVIIGKLIPAGTGINRYRNIQVQPTEEARAAAYTIPSYEDQYYSPDFGQATGAAVPLDDYGYSDYR.

The Zn(2+) site is built by Cys60, Cys62, Cys75, and Cys78. 3 residues coordinate Mg(2+): Asp535, Asp537, and Asp539. The Zn(2+) site is built by Cys891, Cys968, Cys975, and Cys978.

It belongs to the RNA polymerase beta' chain family. The RNAP catalytic core consists of 2 alpha, 1 beta, 1 beta' and 1 omega subunit. When a sigma factor is associated with the core the holoenzyme is formed, which can initiate transcription. Mg(2+) is required as a cofactor. Zn(2+) serves as cofactor.

It carries out the reaction RNA(n) + a ribonucleoside 5'-triphosphate = RNA(n+1) + diphosphate. DNA-dependent RNA polymerase catalyzes the transcription of DNA into RNA using the four ribonucleoside triphosphates as substrates. This Mycobacterium avium (strain 104) protein is DNA-directed RNA polymerase subunit beta'.